The sequence spans 386 residues: mRNA-capping enzyme subunit beta (386 aa).

The segment at 1–137 (MDIGKMINDD…TTTITGCPPS (137 aa)) is disordered. Polar residues-rich tracts occupy residues 20–32 (VKSLLNSPPTGLP) and 41–56 (KASSTSDLAQQLTNEM). Acidic residues predominate over residues 57 to 67 (ESGEDDDDEDA). The span at 93–115 (RHAERDHRPPPHRQDRRDPRMER) shows a compositional bias: basic and acidic residues.

Belongs to the fungal TPase family. Heterodimer. The mRNA-capping enzyme is composed of two separate chains alpha and beta, respectively a mRNA guanylyltransferase and an mRNA 5'-triphosphate monophosphatase. Mg(2+) serves as cofactor.

The protein resides in the nucleus. The catalysed reaction is a 5'-end triphospho-ribonucleoside in mRNA + H2O = a 5'-end diphospho-ribonucleoside in mRNA + phosphate + H(+). In terms of biological role, first step of mRNA capping. Converts the 5'-triphosphate end of a nascent mRNA chain into a diphosphate end. This chain is mRNA-capping enzyme subunit beta (CET1), found in Yarrowia lipolytica (strain CLIB 122 / E 150) (Yeast).